The chain runs to 149 residues: MDQQAQPQFQIQKVYVKDLSFSIPNSDKIWTTNWKPELHTDLKVEATKLPEENTYETVLTLEVKVENDGMVAFEAEVKQAGIFTVANMQEAQIEHAKKAFCPNILYHYAREAISDLVISGGFPQLCLSAVNFDAMYQDSLKESADSKQH.

This sequence belongs to the SecB family. In terms of assembly, homotetramer, a dimer of dimers. One homotetramer interacts with 1 SecA dimer.

It localises to the cytoplasm. Its function is as follows. One of the proteins required for the normal export of preproteins out of the cell cytoplasm. It is a molecular chaperone that binds to a subset of precursor proteins, maintaining them in a translocation-competent state. It also specifically binds to its receptor SecA. The polypeptide is Protein-export protein SecB 2 (Francisella tularensis subsp. tularensis (strain FSC 198)).